The chain runs to 153 residues: Large ribosomal subunit protein uL15 (153 aa).

The tract at residues 1-49 (MQLHNLYPFPEERKTRRRVGRGSGSGLGCTAGKGHKGQNARAGGGVAPG) is disordered. Gly residues predominate over residues 21–31 (RGSGSGLGCTA).

It belongs to the universal ribosomal protein uL15 family. As to quaternary structure, part of the 50S ribosomal subunit.

Its function is as follows. Binds to the 23S rRNA. The polypeptide is Large ribosomal subunit protein uL15 (Desulfovibrio desulfuricans (strain ATCC 27774 / DSM 6949 / MB)).